The chain runs to 85 residues: Acyl carrier protein ScoB (85 aa).

The 77-residue stretch at 1-77 (MPAPLTLDGF…QWWQLLSARQ (77 aa)) folds into the Carrier domain. An O-(pantetheine 4'-phosphoryl)serine modification is found at S38.

It belongs to the acyl carrier protein (ACP) family. Pantetheine 4'-phosphate is required as a cofactor.

It participates in lipid metabolism; fatty acid metabolism. Functionally, acyl-carrier protein (ACP) involved in the biosynthesis of a unique class of isonitrile lipopeptides (INLPs). Is the dedicated ACP for the loading of activated acyl groups catalyzed by ScoC. The protein is Acyl carrier protein ScoB of Streptomyces coeruleorubidus.